Here is a 2624-residue protein sequence, read N- to C-terminus: Highly reducing polyketide synthase ALT1 (2624 aa).

One can recognise a Ketosynthase family 3 (KS3) domain in the interval 28–449 (VLPLAIVGMG…GSNAHCILES (422 aa)). Residue C200 is the For beta-ketoacyl synthase activity of the active site. Residues 289-308 (VRGTSSNSDGKTPGMSMPSS) are disordered. Residues H335 and H372 each act as for beta-ketoacyl synthase activity in the active site. Over residues 523 to 544 (ESYSNHHTLTETTNPSNNTATN) the composition is skewed to polar residues. The segment at 523–545 (ESYSNHHTLTETTNPSNNTATNG) is disordered. Residues 639 to 945 (VFTGQGAQWA…GYTPAMIRGK (307 aa)) form a malonyl-CoA:ACP transacylase (MAT) domain region. The N-terminal hotdog fold stretch occupies residues 1009-1140 (HELLGSQTLE…GQVRPGRDAH (132 aa)). The dehydratase (DH) domain stretch occupies residues 1009-1301 (HELLGSQTLE…LEGGKFSPIE (293 aa)). Residues 1009-1306 (HELLGSQTLE…FSPIEVDDGI (298 aa)) enclose the PKS/mFAS DH domain. H1041 acts as the Proton acceptor; for dehydratase activity in catalysis. Residues 1157-1306 (QYPRPVDSLY…FSPIEVDDGI (150 aa)) are C-terminal hotdog fold. D1217 acts as the Proton donor; for dehydratase activity in catalysis. Residues 1493-1599 (LEIGAGTGGA…RKLLAPEGYL (107 aa)) form a methyltransferase (CMet) domain region. An enoyl reductase (ER) (ER) domain region spans residues 1895–2205 (GLLQTLKWVD…KGTHLGKIVV (311 aa)). The tract at residues 2230–2509 (TYVLVGGLGG…DSDALRFFIT (280 aa)) is ketoreductase (KR) domain. The Carrier domain occupies 2522 to 2600 (ASLDLVTRTI…GLAKLILDAL (79 aa)). S2559 carries the post-translational modification O-(pantetheine 4'-phosphoryl)serine.

Its pathway is mycotoxin biosynthesis. Highly reducing polyketide synthase; part of the gene cluster that mediates the biosynthesis of the host-selective toxins (HSTs) AAL-toxins, sphinganine-analog mycotoxins responsible for Alternaria stem canker on tomato by the tomato pathotype. The biosynthesis starts with the polyketide synthase ALT1-catalyzed C-16 carbon chain assembly from one starter acetyl-CoA unit with malonyl-CoA extender units. ALT1 also selectively transfers methyl groups at the first and the third cycle of chain elongation for AAL toxin. The C-16 polyketide chain is released from the enzyme by a nucleophilic attack of a carbanion, which is derived from R-carbon of glycin by decarboxylation, on the carbonyl carbon of polyketide acyl chain. This step is probably catalyzed by a pyridoxal 5'-phosphate-dependent aminoacyl transferase ALT4. The respective functions of the other enzymes encoded by the cluster have still to be elucidated. The sphingosine N-acyltransferase-like protein ALT7 seems not to act as a resistance/self-tolerance factor against the toxin in the toxin biosynthetic gene cluster, contrary to what is expected. The polypeptide is Highly reducing polyketide synthase ALT1 (Alternaria alternata (Alternaria rot fungus)).